The chain runs to 429 residues: Cyclin-B2-2 (429 aa).

The interval 66-98 (SQRKQESCDKKKLDSLHPSISRSQEETKKLKPS) is disordered. Over residues 68–80 (RKQESCDKKKLDS) the composition is skewed to basic and acidic residues.

The protein belongs to the cyclin family. Cyclin AB subfamily. As to quaternary structure, interacts with CDC20-1 and CDC20-2. As to expression, expressed in roots.

The sequence is that of Cyclin-B2-2 (CYCB2-2) from Arabidopsis thaliana (Mouse-ear cress).